Reading from the N-terminus, the 347-residue chain is NHL repeat-containing protein 3 (347 aa).

The N-terminal stretch at 1–22 is a signal peptide; the sequence is MARAWVCLAGAAFFLSCLVLHS. The stretch at 47 to 93 is one NHL 1 repeat; it reads RLDLGWPKNSEYFTGATFCVAVDSLNGLVYVAQRGDNIPKVLVFSED. Residue N101 is glycosylated (N-linked (GlcNAc...) asparagine). 2 NHL repeats span residues 150 to 196 and 200 to 243; these read TPGK…LSQD and LWLR…FDKD. 2 N-linked (GlcNAc...) asparagine glycosylation sites follow: N206 and N278. An NHL 4 repeat occupies 294-338; that stretch reads GDCSVVSTIQLADQVLPHLLEVDRKTGAVYVAEIGAKQIQKYIPW.

This is NHL repeat-containing protein 3 (Nhlrc3) from Mus musculus (Mouse).